The sequence spans 485 residues: Glutamyl-tRNA(Gln) amidotransferase subunit A (485 aa).

Catalysis depends on charge relay system residues lysine 74 and serine 149. Residue serine 173 is the Acyl-ester intermediate of the active site.

It belongs to the amidase family. GatA subfamily. As to quaternary structure, heterotrimer of A, B and C subunits.

It catalyses the reaction L-glutamyl-tRNA(Gln) + L-glutamine + ATP + H2O = L-glutaminyl-tRNA(Gln) + L-glutamate + ADP + phosphate + H(+). Allows the formation of correctly charged Gln-tRNA(Gln) through the transamidation of misacylated Glu-tRNA(Gln) in organisms which lack glutaminyl-tRNA synthetase. The reaction takes place in the presence of glutamine and ATP through an activated gamma-phospho-Glu-tRNA(Gln). In Synechococcus sp. (strain RCC307), this protein is Glutamyl-tRNA(Gln) amidotransferase subunit A.